The chain runs to 355 residues: Zinc transporter ZIP13 homolog (355 aa).

The N-linked (GlcNAc...) asparagine glycan is linked to N4. Helical transmembrane passes span 37 to 57, 79 to 99, and 118 to 138; these read VFSLLGSVVIGLSGIFPLIII, VLLSFAVGGLLGDVFLHLLPE, and LWVLSGILIFTIVEKIFSGYA. N218 is a glycosylation site (N-linked (GlcNAc...) asparagine). A run of 2 helical transmembrane segments spans residues 273–293 and 301–321; these read LLTAGAGLLGALVAIGGSGVT and SWIMPFTAGGFLHIALVTVLP.

The protein belongs to the ZIP transporter (TC 2.A.5) family. KE4/Catsup subfamily.

It localises to the basolateral cell membrane. The protein localises to the golgi apparatus membrane. Its function is as follows. Involved in zinc transport and homeostasis. The sequence is that of Zinc transporter ZIP13 homolog (Zip99C) from Drosophila melanogaster (Fruit fly).